Consider the following 339-residue polypeptide: MASSAVDQPEGVDETILTLRKVLVNESEPLARRFRALFSLKYIACLQPPTEKTLPAIQAIAAGFTSSSALLKHELAYCLGQTRNPDAVSYLLEVVKNTEQDAMCRHEAAEGLGALGFDTSLDVLKALRDDEKEEDVIRETCDIAVDRILWENSEERKSEKLKPSDFTSIDPAPPLPMASSQPSISDLEKTLLDTKLPLFQRYRAMFALRDLASPPDLPTAVEAVEALAKGLKDPSALFRHEVAFVFGQLCHPASVPSLTETLSDQKEMGMVRHEAAEALGSLGDVEGVEDTLKKFLNDPEQVVRDSIIVALDMAEYEKNGEMEYALVPDSAAPAAVSAA.

HEAT-like PBS-type repeat units follow at residues 71 to 97 (LKHE…VVKN) and 104 to 130 (CRHE…LRDD). His-73, Glu-74, His-106, and Glu-107 together coordinate Fe cation. Residues 159–183 (EKLKPSDFTSIDPAPPLPMASSQPS) form a disordered region. HEAT-like PBS-type repeat units lie at residues 200 to 233 (QRYR…GLKD), 238 to 264 (FRHE…TLSD), and 271 to 298 (VRHE…FLND). Positions 240, 241, 273, and 274 each coordinate Fe cation.

This sequence belongs to the deoxyhypusine hydroxylase family. Fe(2+) is required as a cofactor.

It is found in the cytoplasm. The protein resides in the nucleus. It carries out the reaction [eIF5A protein]-deoxyhypusine + AH2 + O2 = [eIF5A protein]-hypusine + A + H2O. It functions in the pathway protein modification; eIF5A hypusination. In terms of biological role, catalyzes the hydroxylation of the N(6)-(4-aminobutyl)-L-lysine intermediate to form hypusine, an essential post-translational modification only found in mature eIF-5A factor. This chain is Deoxyhypusine hydroxylase (lia1), found in Aspergillus oryzae (strain ATCC 42149 / RIB 40) (Yellow koji mold).